A 63-amino-acid polypeptide reads, in one-letter code: Cecropin-1/3 (63 aa).

An N-terminal signal peptide occupies residues 1 to 23 (MNFYKVFIFVALILAISLGQSEA). Arginine amide is present on Arg-62.

It belongs to the cecropin family.

The protein localises to the secreted. Cecropins have lytic and antibacterial activity against several Gram-positive and Gram-negative bacteria. This chain is Cecropin-1/3 (Cec1), found in Drosophila virilis (Fruit fly).